Here is an 83-residue protein sequence, read N- to C-terminus: Cytotoxin A5 (83 aa).

The first 21 residues, 1–21 (MKTLLLTMVVVTIVCLDLGYT), serve as a signal peptide directing secretion. 4 disulfide bridges follow: Cys-24/Cys-43, Cys-36/Cys-61, Cys-65/Cys-76, and Cys-77/Cys-82.

Belongs to the three-finger toxin family. Short-chain subfamily. Orphan group XV sub-subfamily. Expressed by the venom gland.

It localises to the secreted. It is found in the target cell membrane. In terms of biological role, non-cytotoxic protein that does not show lytic and hemolytic activities, but can induce aggregation and fusion of sphingomyelin vesicles. It binds to integrin alpha-V/beta-3 (ITGAV/ITGB3) with high affinity, and it inhibits osteoclast differentiation and bone resorption in mice, probably due to binding to integrin alpha-V/beta-3. This chain is Cytotoxin A5, found in Naja atra (Chinese cobra).